The primary structure comprises 103 residues: Large ribosomal subunit protein bL21 (103 aa).

The protein belongs to the bacterial ribosomal protein bL21 family. In terms of assembly, part of the 50S ribosomal subunit. Contacts protein L20.

In terms of biological role, this protein binds to 23S rRNA in the presence of protein L20. The sequence is that of Large ribosomal subunit protein bL21 from Thioalkalivibrio sulfidiphilus (strain HL-EbGR7).